The sequence spans 552 residues: Transcription factor lcsF (552 aa).

4 disordered regions span residues 1–132, 169–209, 232–258, and 297–349; these read MAPA…DLDP, TSSY…ASLS, EATS…HWSS, and ELTS…QHGA. Residues 31–55 form a basic motif region; the sequence is KDRKEKKRIQNRVAQRSYRSRMKAR. Residues 31-76 enclose the bZIP domain; it reads KDRKEKKRIQNRVAQRSYRSRMKARLGELQSRLQAHEEQKAKEEAE. The leucine-zipper stretch occupies residues 56-63; that stretch reads LGELQSRL. Basic and acidic residues predominate over residues 64–79; that stretch reads QAHEEQKAKEEAERCD. Composition is skewed to polar residues over residues 98–119 and 169–186; these read TPPS…NSAS and TSSY…SLSQ. Residues 298–347 show a composition bias toward polar residues; it reads LTSTGDLPNATWRPSQQFSGPETTPRSHNAENPTQQQSPINDDTPSTTQH.

It belongs to the bZIP family.

The protein localises to the nucleus. In terms of biological role, transcription factor that regulates the expression of the gene cluster that mediates the biosynthesis of the lipopeptide antibiotics leucinostatins that show extensive biological activities, including antimalarial, antiviral, antibacterial, antifungal, and antitumor activities, as well as phytotoxic. All 20 genes in the cluster are up-regulated to some extent by lcsF, with the exception of lcsL and lcsP, which are down-regulated. In Purpureocillium lilacinum (Paecilomyces lilacinus), this protein is Transcription factor lcsF.